The following is a 218-amino-acid chain: Sodium channel regulatory subunit beta-1 (218 aa).

Residues 1 to 18 (MGTLLALVVGAVLVSSAW) form the signal peptide. At 19-157 (GGCVEVDSET…DKANRDMASI (139 aa)) the chain is on the extracellular side. Cystine bridges form between Cys-21-Cys-43 and Cys-40-Cys-121. The 129-residue stretch at 22-150 (VEVDSETEAV…KIHLEVVDKA (129 aa)) folds into the Ig-like C2-type domain. Asn-93, Asn-110, Asn-114, and Asn-135 each carry an N-linked (GlcNAc...) asparagine glycan. Residues 158–179 (VSEIMMYVLIVVLTIWLVAEMV) traverse the membrane as a helical segment. Topologically, residues 180–218 (YCYKKIAAATEAAAQENASEYLAITSESKENCTGVQVAE) are cytoplasmic.

It belongs to the sodium channel auxiliary subunit SCN1B (TC 8.A.17) family. As to quaternary structure, a voltage-gated sodium (Nav) channel consists of an ion-conducting pore-forming alpha subunit functional on its own that is regulated by one or more beta subunits. Interacts with SCN1A; regulatory subunit of SCN1A/Nav1.1. Interacts with SCN3A; regulatory subunit of SCN3A/Nav1.3. Interacts with SCN4A; regulatory subunit of SCN4A/Nav1.4. Interacts with SCN5A; regulatory subunit of SCN5A/Nav1.5. Interacts with SCN8A; regulatory subunit of SCN8A/Nav1.6. Interacts with SCN9A; regulatory subunit of SCN9A/Nav1.7. Interacts with SCN10A; regulatory subunit of SCN10A/Nav1.8. Interacts with NFASC. Interacts with TMEM65. As to expression, detected in brain (at protein level). Expressed in brain, heart, skeletal muscle and spinal cord.

Its subcellular location is the cell membrane. It localises to the perikaryon. The protein localises to the cell projection. It is found in the axon. Regulatory subunit of multiple voltage-gated sodium (Nav) channels directly mediating the depolarization of excitable membranes. Navs, also called VGSCs (voltage-gated sodium channels) or VDSCs (voltage-dependent sodium channels), operate by switching between closed and open conformations depending on the voltage difference across the membrane. In the open conformation they allow Na(+) ions to selectively pass through the pore, along their electrochemical gradient. The influx of Na+ ions provokes membrane depolarization, initiating the propagation of electrical signals throughout cells and tissues. The accessory beta subunits participate in localization and functional modulation of the Nav channels. Modulates the activity of SCN1A/Nav1.1, SCN2A/Nav1.2, SCN3A/Nav1.3, SCN4A/Nav1.4, SCN5A/Nav1.5, SCN8A/Nav1.6, SCN9A/Nav1.7 and SCN10A/Nav1.8. This Rattus norvegicus (Rat) protein is Sodium channel regulatory subunit beta-1.